Consider the following 117-residue polypeptide: Alpha-endosulfine (117 aa).

Residues 1–53 (MAAPLGTGARAEDSGQEKQDSQEKETVIPERAEEAKLKAKYPNLGQKPGGSDF) form a disordered region. Over residues 10-37 (RAEDSGQEKQDSQEKETVIPERAEEAKL) the composition is skewed to basic and acidic residues. Phosphoserine; by GWL is present on serine 67. The interval 76-117 (KMKNKQLPTAGPDKNLVTGDHIPKPQDLPQRKSSLVASKLAG) is disordered.

The protein belongs to the endosulfine family. In terms of processing, phosphorylation at Ser-67 by GWL during mitosis is essential for interaction with PPP2R2D (PR55-delta) and subsequent inactivation of PP2A.

The protein localises to the cytoplasm. Its function is as follows. Protein phosphatase inhibitor that specifically inhibits protein phosphatase 2A (PP2A) during mitosis. When phosphorylated at Ser-67 during mitosis, specifically interacts with PPP2R2D (PR55-delta) and inhibits its activity, leading to inactivation of PP2A, an essential condition to keep cyclin-B1-CDK1 activity high during M phase. This is Alpha-endosulfine (ENSA) from Gallus gallus (Chicken).